The chain runs to 185 residues: Probable chorismate pyruvate-lyase 1 (185 aa).

Substrate is bound by residues Arg-70, Leu-108, and Glu-166.

Belongs to the UbiC family.

Its subcellular location is the cytoplasm. It catalyses the reaction chorismate = 4-hydroxybenzoate + pyruvate. It participates in cofactor biosynthesis; ubiquinone biosynthesis. Its function is as follows. Removes the pyruvyl group from chorismate, with concomitant aromatization of the ring, to provide 4-hydroxybenzoate (4HB) for the ubiquinone pathway. This Pseudomonas fluorescens (strain Pf0-1) protein is Probable chorismate pyruvate-lyase 1.